We begin with the raw amino-acid sequence, 287 residues long: UPF0725 protein At1g19060 (287 aa).

The protein belongs to the UPF0725 (EMB2204) family.

In Arabidopsis thaliana (Mouse-ear cress), this protein is UPF0725 protein At1g19060.